A 534-amino-acid chain; its full sequence is MLCLGIEGTAEKTGVGIVDEAGNVLSLRGKPLIPEKGGIHPREAAEHHAKWIPRLIAEACRDAGVELGEIGLISFSRGPGLGPALRTVATAARTLALSLDVPIVGVNHCIGHIEIGRLTTGASDPVSLYVSGGNTQVIAFNEGRYRVFGETLDIAVGNMLDQFARESGLGHPGGPVIEQLALKASEYIELPYSVKGMDISFSGLLTAALRKMEAGASLEDLAYSIQETAFSMLVEVTERALAYTEKNQVLLCGGVAVNRRLRDMLREMCQEHHVEFHMPPPEYCGDNGAMIAWLGQLVYKYRGPDALEDTTVVQRYRTDEVDVPWMRESEAGIELPPDILAKGAEANIYRGQWIGRPCIIKERISKGYRIPEIDQKLRSSRTRREARLINQAKGAGVHTPVLFDVDPDGGVMVMEEVRGTPFRDAVEDTELCSRIGEAIGRLHHAGIIHGDLTGSNIIIRGGDVVFIDFGLGRFSDEIEDMGVDLLVLKKSLESTHYALAGECFSRVLEGYGKIIDADIQSKIREIESRGRYTD.

The tract at residues 1-325 is kae1; the sequence is MLCLGIEGTA…YRTDEVDVPW (325 aa). 3 residues coordinate Fe cation: histidine 108, histidine 112, and tyrosine 129. Residues 129 to 133, aspartate 161, glycine 174, glutamate 178, and asparagine 258 contribute to the L-threonylcarbamoyladenylate site; that span reads YVSGG. Aspartate 286 lines the Fe cation pocket. Residues 335 to 534 enclose the Protein kinase domain; sequence LPPDILAKGA…EIESRGRYTD (200 aa). ATP contacts are provided by residues 340-348 and lysine 361; that span reads LAKGAEANI. Catalysis depends on aspartate 451, which acts as the Proton acceptor; for kinase activity.

In the N-terminal section; belongs to the KAE1 / TsaD family. This sequence in the C-terminal section; belongs to the protein kinase superfamily. Tyr protein kinase family. BUD32 subfamily. Component of the KEOPS complex that consists of Kae1, Bud32, Cgi121 and Pcc1; the whole complex dimerizes. The cofactor is Fe(2+).

It is found in the cytoplasm. The catalysed reaction is L-seryl-[protein] + ATP = O-phospho-L-seryl-[protein] + ADP + H(+). It carries out the reaction L-threonyl-[protein] + ATP = O-phospho-L-threonyl-[protein] + ADP + H(+). The enzyme catalyses L-threonylcarbamoyladenylate + adenosine(37) in tRNA = N(6)-L-threonylcarbamoyladenosine(37) in tRNA + AMP + H(+). Functionally, required for the formation of a threonylcarbamoyl group on adenosine at position 37 (t(6)A37) in tRNAs that read codons beginning with adenine. Is a component of the KEOPS complex that is probably involved in the transfer of the threonylcarbamoyl moiety of threonylcarbamoyl-AMP (TC-AMP) to the N6 group of A37. The Kae1 domain likely plays a direct catalytic role in this reaction. The Bud32 domain probably displays kinase activity that regulates Kae1 function. The protein is Probable bifunctional tRNA threonylcarbamoyladenosine biosynthesis protein of Methanothermobacter thermautotrophicus (strain ATCC 29096 / DSM 1053 / JCM 10044 / NBRC 100330 / Delta H) (Methanobacterium thermoautotrophicum).